Consider the following 362-residue polypeptide: DLA class I histocompatibility antigen, A9/A9 alpha chain (362 aa).

Residues 1 to 24 (MEVVMPRALLVLLSAALALTPTRA) form the signal peptide. The segment at 25–114 (GSHSLRYFYT…LRGYYNQSEA (90 aa)) is alpha-1. At 25–306 (GSHSLRYFYT…RRWEPSPLST (282 aa)) the chain is on the extracellular side. Asparagine 110 is a glycosylation site (N-linked (GlcNAc...) asparagine). An alpha-2 region spans residues 115 to 207 (GSHTRQTMYG…EMGKETLLRA (93 aa)). 2 cysteine pairs are disulfide-bonded: cysteine 125–cysteine 189 and cysteine 228–cysteine 284. Residues 208–299 (DPPSTRVTHH…GLPEPITRRW (92 aa)) are alpha-3. One can recognise an Ig-like C1-type domain in the interval 210-296 (PSTRVTHHPV…QHEGLPEPIT (87 aa)). Positions 300–306 (EPSPLST) are connecting peptide. Residues 307 to 329 (IVIVSIAALVLLVVAGVIGAVIW) traverse the membrane as a helical segment. Residues 330–362 (RKQRSGGKGPGYSHAARDDSAQGSDVSLTAPRV) are Cytoplasmic-facing. A disordered region spans residues 333–362 (RSGGKGPGYSHAARDDSAQGSDVSLTAPRV).

It belongs to the MHC class I family. Heterodimer of an alpha chain and a beta chain (beta-2-microglobulin).

The protein localises to the membrane. Involved in the presentation of foreign antigens to the immune system. This is DLA class I histocompatibility antigen, A9/A9 alpha chain from Canis lupus familiaris (Dog).